We begin with the raw amino-acid sequence, 207 residues long: MIRKCTDHGYFRGGSCQQCKRPGRYVLDDGREEKLGRFVSGTLRHFPASAGVKMDKYGWIDLNAFCEVMKKRYNWMRKEYLYALVESDEKGRYQISGPMIRARYGHSVNVDLDYDESDTPYVYYGASPEEVDVLLENGIFPIKQRYVHLSTTYEKAAEVALIHTESPVILQVDAFRAQEDGISLKLATDYIVLAEKIPPDYLFVLED.

The protein belongs to the KptA/TPT1 family.

Its function is as follows. Removes the 2'-phosphate from RNA via an intermediate in which the phosphate is ADP-ribosylated by NAD followed by a presumed transesterification to release the RNA and generate ADP-ribose 1''-2''-cyclic phosphate (APPR&gt;P). May function as an ADP-ribosylase. The chain is Probable RNA 2'-phosphotransferase from Methanosarcina mazei (strain ATCC BAA-159 / DSM 3647 / Goe1 / Go1 / JCM 11833 / OCM 88) (Methanosarcina frisia).